The sequence spans 386 residues: Histone-lysine N-methyltransferase SETD7 (386 aa).

The span at 1–12 (MDSSDDEIACDE) shows a compositional bias: acidic residues. Residues 1–21 (MDSSDDEIACDEGDYKGAKDD) form a disordered region. 4 MORN repeats span residues 15 to 38 (YKGA…SGDE), 39 to 61 (FIGA…DDST), 62 to 84 (LEGN…DGSI), and 109 to 131 (FRGQ…DGGS). The SET domain maps to 222-344 (ELVYAAPSKI…EGDELTVHYT (123 aa)). S-adenosyl-L-methionine-binding positions include 234-236 (AGE), N304, and H305.

This sequence belongs to the class V-like SAM-binding methyltransferase superfamily. Histone-lysine methyltransferase family. SET7 subfamily.

The protein localises to the nucleus. It is found in the chromosome. The catalysed reaction is L-lysyl(4)-[histone H3] + S-adenosyl-L-methionine = N(6)-methyl-L-lysyl(4)-[histone H3] + S-adenosyl-L-homocysteine + H(+). The enzyme catalyses L-lysyl-[protein] + S-adenosyl-L-methionine = N(6)-methyl-L-lysyl-[protein] + S-adenosyl-L-homocysteine + H(+). Functionally, histone methyltransferase that specifically monomethylates 'Lys-4' of histone H3. H3 'Lys-4' methylation represents a specific tag for epigenetic transcriptional activation. Plays a central role in the transcriptional activation of genes. Also has methyltransferase activity toward non-histone proteins. The protein is Histone-lysine N-methyltransferase SETD7 (setd7) of Halocynthia roretzi (Sea squirt).